The sequence spans 421 residues: Serine--tRNA ligase (421 aa).

230-232 is an L-serine binding site; that stretch reads TAE. Residue 261-263 participates in ATP binding; sequence RRE. Residue E284 participates in L-serine binding. Residue 348–351 participates in ATP binding; it reads EISS. S383 contributes to the L-serine binding site.

This sequence belongs to the class-II aminoacyl-tRNA synthetase family. Type-1 seryl-tRNA synthetase subfamily. As to quaternary structure, homodimer. The tRNA molecule binds across the dimer.

It is found in the cytoplasm. The enzyme catalyses tRNA(Ser) + L-serine + ATP = L-seryl-tRNA(Ser) + AMP + diphosphate + H(+). It catalyses the reaction tRNA(Sec) + L-serine + ATP = L-seryl-tRNA(Sec) + AMP + diphosphate + H(+). It participates in aminoacyl-tRNA biosynthesis; selenocysteinyl-tRNA(Sec) biosynthesis; L-seryl-tRNA(Sec) from L-serine and tRNA(Sec): step 1/1. Functionally, catalyzes the attachment of serine to tRNA(Ser). Is also able to aminoacylate tRNA(Sec) with serine, to form the misacylated tRNA L-seryl-tRNA(Sec), which will be further converted into selenocysteinyl-tRNA(Sec). This Finegoldia magna (strain ATCC 29328 / DSM 20472 / WAL 2508) (Peptostreptococcus magnus) protein is Serine--tRNA ligase.